Here is a 411-residue protein sequence, read N- to C-terminus: Citrate synthase (411 aa).

Residues His304 and Asp363 contribute to the active site.

Belongs to the citrate synthase family.

The catalysed reaction is oxaloacetate + acetyl-CoA + H2O = citrate + CoA + H(+). Its pathway is carbohydrate metabolism; tricarboxylic acid cycle; isocitrate from oxaloacetate: step 1/2. This is Citrate synthase (gltA) from Rickettsia canadensis.